Reading from the N-terminus, the 123-residue chain is Cell division protein SepF (123 aa).

The protein belongs to the SepF family. Homodimer. Interacts with FtsZ.

The protein localises to the cytoplasm. In terms of biological role, cell division protein that is part of the divisome complex and is recruited early to the Z-ring. Probably stimulates Z-ring formation, perhaps through the cross-linking of FtsZ protofilaments. Its function overlaps with FtsA. This chain is Cell division protein SepF, found in Tropheryma whipplei (strain TW08/27) (Whipple's bacillus).